Reading from the N-terminus, the 410-residue chain is Argininosuccinate synthase (410 aa).

ATP is bound by residues 13–21 and alanine 40; that span reads AYSGGLDTS. 2 residues coordinate L-citrulline: tyrosine 91 and serine 96. Glycine 121 is an ATP binding site. Residues threonine 123, asparagine 127, and aspartate 128 each coordinate L-aspartate. Asparagine 127 is a binding site for L-citrulline. Residues arginine 131, serine 182, serine 191, glutamate 267, and tyrosine 279 each contribute to the L-citrulline site.

This sequence belongs to the argininosuccinate synthase family. Type 1 subfamily. Homotetramer.

It localises to the cytoplasm. It catalyses the reaction L-citrulline + L-aspartate + ATP = 2-(N(omega)-L-arginino)succinate + AMP + diphosphate + H(+). It participates in amino-acid biosynthesis; L-arginine biosynthesis; L-arginine from L-ornithine and carbamoyl phosphate: step 2/3. The sequence is that of Argininosuccinate synthase from Gluconobacter oxydans (strain 621H) (Gluconobacter suboxydans).